The chain runs to 134 residues: MAFLKKSLFLVLFLGVVSLSFCEEEKREEHEEEKRDEEDAESLGKRYGGLSPLRISKRVPPGFTPFRSPARSISGLTPIRLSKRVPPGFTPFRSPARRISEADPGFTPSFVVIKGLSPLRGKRRPPGFSPFRVD.

A signal peptide spans 1–22 (MAFLKKSLFLVLFLGVVSLSFC). 3 propeptides span residues 23–44 (EEEKREEHEEEKRDEEDAESLG), 71–82 (RSISGLTPIRLS), and 99–121 (ISEADPGFTPSFVVIKGLSPLRG). Residues 24 to 33 (EEKREEHEEE) are compositionally biased toward basic and acidic residues. The tract at residues 24–71 (EEKREEHEEEKRDEEDAESLGKRYGGLSPLRISKRVPPGFTPFRSPAR) is disordered. The residue at position 126 (Pro126) is a 4-hydroxyproline; partial; in form [Hyp3]-bradykinin and [Hyp3]-bradykinin-Val,Asp.

It belongs to the frog skin active peptide (FSAP) family. Bradykinin-related peptide subfamily. In terms of tissue distribution, expressed by the skin glands. Expression levels in inguinal glands are much higher than in granular glands.

Its subcellular location is the secreted. May produce in vitro relaxation of rat arterial smooth muscle and constriction of intestinal smooth muscle. May target bradykinin receptors (BDKRB). The chain is Bradykinin-related peptides from Physalaemus nattereri (Cuyaba dwarf frog).